A 409-amino-acid chain; its full sequence is Protein a6 (409 aa).

Serine 86 carries the phosphoserine modification. The segment covering 106–120 (RAHRTGRRQAPRRAA) has biased composition (basic residues). The interval 106–165 (RAHRTGRRQAPRRAATHSYPVTDSILITSDDEHNEQEPSSTARVRSQLSMRSPPPLAPLT) is disordered. Threonine 133 is modified (phosphothreonine). Position 134 is a phosphoserine (serine 134). Over residues 142-155 (EPSSTARVRSQLSM) the composition is skewed to polar residues.

The polypeptide is Protein a6 (a6) (Drosophila melanogaster (Fruit fly)).